A 630-amino-acid chain; its full sequence is Chaperone protein HtpG (630 aa).

The segment at 1-338 is a; substrate-binding; the sequence is MTVEANKETL…SNDLSLNVSR (338 aa). Positions 339–555 are b; that stretch reads EILQNDSTVE…QFDMGAQMKK (217 aa). Positions 556 to 630 are c; that stretch reads IMEAAGQKVP…LNRLLLELAN (75 aa).

It belongs to the heat shock protein 90 family. In terms of assembly, homodimer.

The protein resides in the cytoplasm. In terms of biological role, molecular chaperone. Has ATPase activity. The polypeptide is Chaperone protein HtpG (Marinobacter nauticus (strain ATCC 700491 / DSM 11845 / VT8) (Marinobacter aquaeolei)).